A 977-amino-acid polypeptide reads, in one-letter code: Structural protein ORF43 (977 aa).

Residues 531-556 (DNDNINKQQQQQRERNDDDDDDDDST) are disordered.

Belongs to the ascovirus HvAV ORF146 family.

The protein resides in the virion. The polypeptide is Structural protein ORF43 (Noctuidae (owlet moths)).